We begin with the raw amino-acid sequence, 822 residues long: Valine--tRNA ligase (822 aa).

The short motif at 41–51 (PNVTGQLHLGH) is the 'HIGH' region element. Residues 511–515 (KMSKS) carry the 'KMSKS' region motif. Position 514 (Lys514) interacts with ATP. Positions 765 to 822 (EQKGRELKEIQFLKSEILRAEKILTNKGFLEKAPREKIDLERTKLEKLKEKLAFYEKK) form a coiled coil.

This sequence belongs to the class-I aminoacyl-tRNA synthetase family. ValS type 1 subfamily. As to quaternary structure, monomer.

Its subcellular location is the cytoplasm. The enzyme catalyses tRNA(Val) + L-valine + ATP = L-valyl-tRNA(Val) + AMP + diphosphate. Functionally, catalyzes the attachment of valine to tRNA(Val). As ValRS can inadvertently accommodate and process structurally similar amino acids such as threonine, to avoid such errors, it has a 'posttransfer' editing activity that hydrolyzes mischarged Thr-tRNA(Val) in a tRNA-dependent manner. The chain is Valine--tRNA ligase from Mesomycoplasma hyopneumoniae (strain 232) (Mycoplasma hyopneumoniae).